The chain runs to 107 residues: Ig kappa chain V-VI region J539 (107 aa).

Residues 1 to 23 form a framework-1 region; sequence EIVLTQSPAITAASLGQKVTITC. C23 and C87 are disulfide-bonded. Residues 24-33 are complementarity-determining-1; that stretch reads SASSSVSSLH. A framework-2 region spans residues 34–48; it reads WYQQKSGTSPKPWIY. Residues 49-55 are complementarity-determining-2; the sequence is EISKLAS. The segment at 56 to 87 is framework-3; that stretch reads GVPARFSGSGSGTSYSLTINTMEAEDAAIYYC. The tract at residues 88 to 96 is complementarity-determining-3; sequence QQWTYPLIT. The segment at 97-106 is framework-4; that stretch reads FGAGTKLELK.

The chain is Ig kappa chain V-VI region J539 from Mus musculus (Mouse).